The chain runs to 487 residues: Probable Xaa-Pro aminopeptidase AFUB_014460 (487 aa).

Residues D267, D278, E416, and E455 each coordinate Mn(2+).

The protein belongs to the peptidase M24B family. The cofactor is Mn(2+).

The enzyme catalyses Release of any N-terminal amino acid, including proline, that is linked to proline, even from a dipeptide or tripeptide.. In terms of biological role, catalyzes the removal of a penultimate prolyl residue from the N-termini of peptides. This Aspergillus fumigatus (strain CBS 144.89 / FGSC A1163 / CEA10) (Neosartorya fumigata) protein is Probable Xaa-Pro aminopeptidase AFUB_014460.